We begin with the raw amino-acid sequence, 527 residues long: METASGPQEKYQLITRNLQEVLGEDKLMAILKEREVKIYWGTATTGKPHVAYFVPMSKIADFLKAGCEVTILFADLHAYLDNMKAPWELLELRTRYYEHVIKAMLESIGVPLEKLKFIRGTDYQLSKEYTLDVYRLSSVVTQHDAKKAGAEVVKQVEHPLLSGLLYPGLQALDEEYLKVDAQFGGVDQRKIFTFAEKYLPSLGYAKRIHLMNPMVPGLTGSKMSSSEEDSKIDLLDRKEDVKKKLKKAFCEPGNIENNGVLSFIKHVLFPLKSEFVILREEKWGGNKTYTAYETLEKDFAEQVVHPGDLKNSVEAALNKLLDPIREKFNSPELKKLTNAAYPNPSKAKPAEKGTKNSEPETIVPSRLDIRVGKVVSVEKHPDADSLYVEKIDVGEPEPRTVVSGLVQFVPKEQLQDRLVVLLCNLKPQKMRGVESQGMVLCASSVGEPRQVEPLDPPAECCAGERVYVEGYEDGEPDDELKPKKKVFEKLQADFRISEDCIAQWKERNFLTKLGSISCKSLKGGSIS.

Tyr-39 serves as a coordination point for L-tyrosine. The short motif at 44 to 52 (TTGKPHVAY) is the 'HIGH' region element. Residues Tyr-166, Gln-170, Asp-173, and Gln-188 each contribute to the L-tyrosine site. Residues 222–226 (KMSSS) carry the 'KMSKS' region motif. A Nuclear localization signal motif is present at residues 242-247 (KKKLKK). The tract at residues 337–362 (TNAAYPNPSKAKPAEKGTKNSEPETI) is disordered. Residues 348–358 (KPAEKGTKNSE) show a composition bias toward basic and acidic residues. In terms of domain architecture, tRNA-binding spans 363–467 (VPSRLDIRVG…AECCAGERVY (105 aa)).

It belongs to the class-I aminoacyl-tRNA synthetase family. As to quaternary structure, homodimer.

It is found in the cytoplasm. The protein localises to the nucleus. It carries out the reaction tRNA(Tyr) + L-tyrosine + ATP = L-tyrosyl-tRNA(Tyr) + AMP + diphosphate + H(+). Functionally, catalyzes the attachment of tyrosine to tRNA(Tyr) in a two-step reaction: tyrosine is first activated by ATP to form Tyr-AMP and then transferred to the acceptor end of tRNA(Tyr). This is Tyrosine--tRNA ligase, cytoplasmic (YARS1) from Gallus gallus (Chicken).